We begin with the raw amino-acid sequence, 105 residues long: Small ribosomal subunit protein uS10 (105 aa).

The protein belongs to the universal ribosomal protein uS10 family. Part of the 30S ribosomal subunit.

Its function is as follows. Involved in the binding of tRNA to the ribosomes. This is Small ribosomal subunit protein uS10 from Thermus thermophilus (strain ATCC BAA-163 / DSM 7039 / HB27).